The chain runs to 818 residues: uncharacterized protein (818 aa).

Low complexity-rich tracts occupy residues Met1–Ser33, Asn44–Gln68, and Asn97–Asn150. Disordered regions lie at residues Met1 to Gln68, Leu92 to Asn150, Lys164 to Glu220, Asn284 to Asp306, and Asn415 to Asn445. 2 stretches are compositionally biased toward acidic residues: residues Ser172–Glu190 and Asp205–Glu214. A compositionally biased stretch (low complexity) spans Asn284–Arg302. Residues Ile534 to Val554 traverse the membrane as a helical segment. Residues Ala779–Leu808 form a disordered region. A compositionally biased stretch (low complexity) spans Ser784–Ser803.

It is found in the membrane. This is an uncharacterized protein from Dictyostelium discoideum (Social amoeba).